Here is a 156-residue protein sequence, read N- to C-terminus: UPF0587 protein (156 aa).

Zn(2+)-binding residues include cysteine 32, cysteine 35, cysteine 64, and cysteine 67.

It belongs to the UPF0587 family.

This chain is UPF0587 protein, found in Dictyostelium discoideum (Social amoeba).